A 145-amino-acid polypeptide reads, in one-letter code: Large ribosomal subunit protein uL13 (145 aa).

It belongs to the universal ribosomal protein uL13 family. In terms of assembly, part of the 50S ribosomal subunit.

Its function is as follows. This protein is one of the early assembly proteins of the 50S ribosomal subunit, although it is not seen to bind rRNA by itself. It is important during the early stages of 50S assembly. This Staphylococcus saprophyticus subsp. saprophyticus (strain ATCC 15305 / DSM 20229 / NCIMB 8711 / NCTC 7292 / S-41) protein is Large ribosomal subunit protein uL13.